Reading from the N-terminus, the 154-residue chain is Ribonuclease H (154 aa).

The 142-residue stretch at 1 to 142 (MTPKLVIYTD…ADELARLGML (142 aa)) folds into the RNase H type-1 domain. Mg(2+) contacts are provided by Asp10, Glu48, Asp70, and Asp134.

Belongs to the RNase H family. In terms of assembly, monomer. Mg(2+) is required as a cofactor.

It is found in the cytoplasm. The enzyme catalyses Endonucleolytic cleavage to 5'-phosphomonoester.. Its function is as follows. Endonuclease that specifically degrades the RNA of RNA-DNA hybrids. This Caulobacter sp. (strain K31) protein is Ribonuclease H.